The primary structure comprises 289 residues: Survival motor neuron protein (289 aa).

Over residues methionine 1 to glycine 10 the composition is skewed to gly residues. The interval methionine 1 to aspartate 27 is disordered. The interval serine 11–aspartate 42 is P1 (binding site for GEMIN2). Residue threonine 23 is modified to Phosphothreonine. Serine 26 and serine 29 each carry phosphoserine. A Glycyl lysine isopeptide (Lys-Gly) (interchain with G-Cter in SUMO2) cross-link involves residue lysine 49. The segment at glycine 55 to lysine 88 is disordered. Residues glycine 66 to lysine 80 are compositionally biased toward basic residues. The residue at position 67 (threonine 67) is a Phosphothreonine. A Tudor domain is found at glutamine 89 to asparagine 149. Residues lysine 95–lysine 205 form a required for interaction with RPP20/POP7 region. Residues threonine 150–cysteine 226 are disordered. Residues arginine 171–serine 181 are compositionally biased toward basic residues. Lysine 205 participates in a covalent cross-link: Glycyl lysine isopeptide (Lys-Gly) (interchain with G-Cter in SUMO2). Residues glycine 212–cysteine 226 are compositionally biased toward pro residues. The interval proline 235 to tryptophan 262 is P2 (binding site for SM B). The required for interaction with SYNCRIP stretch occupies residues glycine 274–asparagine 289.

This sequence belongs to the SMN family. As to quaternary structure, homooligomer; may form higher order homooligomers in the dimer to octamer range. Part of the core SMN complex that contains SMN1, GEMIN2/SIP1, DDX20/GEMIN3, GEMIN4, GEMIN5, GEMIN6, GEMIN7, GEMIN8 and STRAP/UNRIP. Part of the SMN-Sm complex that contains SMN1, GEMIN2/SIP1, DDX20/GEMIN3, GEMIN4, GEMIN5, GEMIN6, GEMIN7, GEMIN8, STRAP/UNRIP and the Sm proteins SNRPB, SNRPD1, SNRPD2, SNRPD3, SNRPE, SNRPF and SNRPG. Component of an import snRNP complex composed of KPNB1, RNUT1, SMN1 and ZNF259. Interacts with DDX20, FBL, NOLA1, RNUT1 and with several spliceosomal snRNP core Sm proteins, including SNRPB, SNRPD1, SNRPD2, SNRPD3, SNRPE and ILF3. Interacts with GEMIN2; the interaction is direct. Interacts with GEMIN3; the interaction is direct. Interacts with GEMIN8; the interaction is direct. Interacts with SNRPB; the interaction is direct. Interacts (via Tudor domain) with SNRPD1 (via C-terminus); the interaction is direct. Interacts with SNRPD2; the interaction is direct. Interacts (via Tudor domain) with SNRPD3 (via C-terminus); the interaction is direct. Interacts with SNRPE; the interaction is direct. Interacts with OSTF1, LSM10, LSM11 and RPP20/POP7. Interacts (via C-terminal region) with ZPR1 (via C-terminal region). Interacts (via Tudor domain) with COIL. Interacts with SETX; recruits SETX to POLR2A. Interacts with POLR2A (via the C-terminal domain (CTD)). Interacts with PRMT5. Interacts with XRN2. Interacts (via C-terminus) with FMR1 (via C-terminus); the interaction is direct and occurs in a RNA-independent manner. Interacts with SYNCRIP. Interacts (via Tudor domain) with SF3B2 (methylated form). Interacts with WRAP53/TCAB1. Interacts (via Tudor domain) with ELAVL4 in an RNA-independent manner; the interaction is required for localization of ELAVL4 to RNA granules. Interacts with FRG1.

Its subcellular location is the nucleus. The protein resides in the gem. It is found in the cajal body. The protein localises to the cytoplasm. It localises to the cytoplasmic granule. Its subcellular location is the perikaryon. The protein resides in the cell projection. It is found in the neuron projection. The protein localises to the axon. It localises to the myofibril. Its subcellular location is the sarcomere. The protein resides in the z line. In terms of biological role, the SMN complex catalyzes the assembly of small nuclear ribonucleoproteins (snRNPs), the building blocks of the spliceosome, and thereby plays an important role in the splicing of cellular pre-mRNAs. Most spliceosomal snRNPs contain a common set of Sm proteins SNRPB, SNRPD1, SNRPD2, SNRPD3, SNRPE, SNRPF and SNRPG that assemble in a heptameric protein ring on the Sm site of the small nuclear RNA to form the core snRNP (Sm core). In the cytosol, the Sm proteins SNRPD1, SNRPD2, SNRPE, SNRPF and SNRPG are trapped in an inactive 6S pICln-Sm complex by the chaperone CLNS1A that controls the assembly of the core snRNP. To assemble core snRNPs, the SMN complex accepts the trapped 5Sm proteins from CLNS1A forming an intermediate. Binding of snRNA inside 5Sm ultimately triggers eviction of the SMN complex, thereby allowing binding of SNRPD3 and SNRPB to complete assembly of the core snRNP. Within the SMN complex, SMN1 acts as a structural backbone and together with GEMIN2 it gathers the Sm complex subunits. Ensures the correct splicing of U12 intron-containing genes that may be important for normal motor and proprioceptive neurons development. Also required for resolving RNA-DNA hybrids created by RNA polymerase II, that form R-loop in transcription terminal regions, an important step in proper transcription termination. May also play a role in the metabolism of small nucleolar ribonucleoprotein (snoRNPs). This is Survival motor neuron protein (Smn1) from Rattus norvegicus (Rat).